A 368-amino-acid chain; its full sequence is Alanine racemase 3 (368 aa).

K42 acts as the Proton acceptor; specific for D-alanine in catalysis. Residue K42 is modified to N6-(pyridoxal phosphate)lysine. Position 141 (R141) interacts with substrate. Catalysis depends on Y262, which acts as the Proton acceptor; specific for L-alanine. M310 provides a ligand contact to substrate.

This sequence belongs to the alanine racemase family. Pyridoxal 5'-phosphate serves as cofactor.

The catalysed reaction is L-alanine = D-alanine. Its pathway is amino-acid biosynthesis; D-alanine biosynthesis; D-alanine from L-alanine: step 1/1. Its function is as follows. Catalyzes the interconversion of L-alanine and D-alanine. May also act on other amino acids. The chain is Alanine racemase 3 (alr3) from Salmonella typhi.